The sequence spans 144 residues: Catabolic 3-dehydroquinase 1 (144 aa).

Y24 acts as the Proton acceptor in catalysis. N75, H81, and D88 together coordinate substrate. H101 serves as the catalytic Proton donor. Residues 102 to 103 (IS) and R112 each bind substrate.

This sequence belongs to the type-II 3-dehydroquinase family. In terms of assembly, homododecamer. Adopts a ring-like structure, composed of an arrangement of two hexameric rings stacked on top of one another.

The enzyme catalyses 3-dehydroquinate = 3-dehydroshikimate + H2O. It participates in aromatic compound metabolism; 3,4-dihydroxybenzoate biosynthesis; 3,4-dihydroxybenzoate from 3-dehydroquinate: step 1/2. Is involved in the catabolism of quinate. Allows the utilization of quinate as carbon source via the beta-ketoadipate pathway. In Fusarium vanettenii (strain ATCC MYA-4622 / CBS 123669 / FGSC 9596 / NRRL 45880 / 77-13-4) (Fusarium solani subsp. pisi), this protein is Catabolic 3-dehydroquinase 1.